The chain runs to 617 residues: Putative metal ion transporter C17A12.14 (617 aa).

Residues 1-141 (MPSNTSRSVP…GKNTRDQPSP (141 aa)) form a disordered region. Ser105 carries the phosphoserine modification. The span at 117–136 (SHPEDIQRKEFETENGKNTR) shows a compositional bias: basic and acidic residues. Residues Ser152, Ser162, Ser226, and Ser241 each carry the phosphoserine modification. 2 helical membrane passes run 560-580 (TILGTILIPLNLVTGLWGMNV) and 590-610 (LGWFFSILGSLMIFAISSFIL).

Belongs to the CorA metal ion transporter (MIT) (TC 1.A.35) family. In terms of assembly, interacts with sad1.

The protein resides in the membrane. The chain is Putative metal ion transporter C17A12.14 from Schizosaccharomyces pombe (strain 972 / ATCC 24843) (Fission yeast).